The primary structure comprises 60 residues: UPF0434 protein ECA2555 (60 aa).

This sequence belongs to the UPF0434 family.

The chain is UPF0434 protein ECA2555 from Pectobacterium atrosepticum (strain SCRI 1043 / ATCC BAA-672) (Erwinia carotovora subsp. atroseptica).